A 389-amino-acid chain; its full sequence is Flagellar P-ring protein (389 aa).

The first 33 residues, 1–33 (MRPLVAARRRAAACCALAACMLALAFAPAAARA), serve as a signal peptide directing secretion.

The protein belongs to the FlgI family. In terms of assembly, the basal body constitutes a major portion of the flagellar organelle and consists of four rings (L,P,S, and M) mounted on a central rod.

The protein localises to the periplasm. The protein resides in the bacterial flagellum basal body. In terms of biological role, assembles around the rod to form the L-ring and probably protects the motor/basal body from shearing forces during rotation. In Burkholderia mallei (strain ATCC 23344), this protein is Flagellar P-ring protein.